We begin with the raw amino-acid sequence, 1106 residues long: Zinc finger protein GLI1 (1106 aa).

Residues 1-20 (MFNSMTPPPISSYGEPCCLR) form an SNAG domain region. The interaction with SUFU stretch occupies residues 120–124 (SYGHL). C2H2-type zinc fingers lie at residues 235-260 (TDCR…NSEH), 268-295 (FVCH…MRRH), 301-325 (HKCT…LRSH), 331-356 (YMCE…NRTH), and 362-387 (YVCK…KTVH). Residues 283–291 (KAQYMLVVH) form an interaction with DNA region. Interaction with DNA stretches follow at residues 345 to 350 (ASDRAK) and 375 to 381 (DPSSLRK). Disordered stretches follow at residues 375–485 (DPSS…DEGP), 516–580 (GLKL…SLPG), 732–792 (YGGP…LYPG), 817–889 (EQGC…PTHS), and 914–942 (GRED…SRAK). A compositionally biased stretch (basic and acidic residues) spans 413 to 428 (EPKREREGGPIREESR). Residues 442–463 (PGAQSSCSSDHSPAGSAANTDS) are compositionally biased toward polar residues. Lysine 518 is subject to N6-acetyllysine. Composition is skewed to low complexity over residues 544–560 (SSSS…RRSS) and 737–753 (GAAA…SLPL). Pro residues predominate over residues 754-766 (GPGPPTNYGPNPC). Polar residues predominate over residues 768 to 779 (QQASYPDPTQET). Residue lysine 1003 forms a Glycyl lysine isopeptide (Lys-Gly) (interchain with G-Cter in SUMO2) linkage. A disordered region spans residues 1054–1087 (DEPQGLSPPPSHDQRGSSGHTPPPSGPPNMAVGN).

Belongs to the GLI C2H2-type zinc-finger protein family. In terms of assembly, interacts with KIF7. Interacts with STK36. Interacts with ZIC1; the interaction enhances transcription activation. Interacts with SUFU; this inhibits transcriptional activation by GLI1. Phosphorylated in vitro by ULK3. In terms of processing, acetylation at Lys-518 down-regulates transcriptional activity. Deacetylated by HDAC1. Post-translationally, ubiquitinated by the CRL2(FEM1B) complex, suppressing GLI1 transcriptional activator activity. In terms of tissue distribution, detected in testis (at protein level). Testis, myometrium and fallopian tube. Also expressed in the brain with highest expression in the cerebellum, optic nerve and olfactory tract. Isoform 1 is detected in brain, spleen, pancreas, liver, kidney and placenta; isoform 2 is not detectable in these tissues.

The protein resides in the cytoplasm. Its subcellular location is the nucleus. Functionally, acts as a transcriptional activator. Binds to the DNA consensus sequence 5'-GACCACCCA-3'. Regulates the transcription of specific genes during normal development. Plays a role in craniofacial development and digital development, as well as development of the central nervous system and gastrointestinal tract. Mediates SHH signaling. Plays a role in cell proliferation and differentiation via its role in SHH signaling. In terms of biological role, acts as a transcriptional activator, but activates a different set of genes than isoform 1. Activates expression of CD24, unlike isoform 1. Mediates SHH signaling. Promotes cancer cell migration. The chain is Zinc finger protein GLI1 (GLI1) from Homo sapiens (Human).